The following is a 370-amino-acid chain: MFFFEKYRPKKPSDFLFNTDVLRQLKYLASNEDVPHIIISGPSGSGKKTLVKFLLEFLYDEDVNILRKRKYNINGSSTKKEIEILQSNYHIIIEPTSTNHDKYILQEIIKQYAMHKSFDIFKTKRKFKTIVIHNIENLANNSQAALRRTMERYAKTCRFIMVCNNLSKIMDPLRSRCRTFCVPLPTIENINTVVDYIAFMENIKLNKNDTKFILDNCNNNLKTAIWFLNCKGLNCSPFIALDEAFDLVVESILECRTGKNIFKIHNDIRTNIYNILITNIKGSEIINILVDKLIRKIDDDVINMNIIQYASKAEYNLTHGRRDITDIEYFISGVMQELVLNRNKEPEKSEKTKSKTGKLSRTNSKKTIKN.

41 to 48 contacts ATP; it reads GPSGSGKK. Over residues 342 to 353 the composition is skewed to basic and acidic residues; that stretch reads RNKEPEKSEKTK. A disordered region spans residues 342–370; the sequence is RNKEPEKSEKTKSKTGKLSRTNSKKTIKN. The span at 354 to 370 shows a compositional bias: basic residues; it reads SKTGKLSRTNSKKTIKN.

It belongs to the activator 1 small subunits family. RfcS subfamily.

Part of the RFC clamp loader complex which loads the PCNA sliding clamp onto DNA. The polypeptide is Putative replication factor C small subunit L478 (Acanthamoeba polyphaga (Amoeba)).